Consider the following 2492-residue polypeptide: Transcriptional regulator ATRX (2492 aa).

Residues 1 to 147 (MTAEPMSESK…KDDFKGPEFR (147 aa)) are disordered. A Glycyl lysine isopeptide (Lys-Gly) (interchain with G-Cter in SUMO2) cross-link involves residue Lys10. Positions 17-27 (KLHDFLAHSSE) are enriched in basic and acidic residues. Phosphoserine is present on residues Ser25 and Ser34. Over residues 40–57 (MNQNTDKISGSGSNSDMM) the composition is skewed to polar residues. Residues 58 to 72 (ENSKEEGTSSSEKSK) show a composition bias toward basic and acidic residues. Tyr89 bears the Phosphotyrosine mark. Residues Ser92 and Ser112 each carry the phosphoserine modification. A compositionally biased stretch (acidic residues) spans 92-108 (SDDEKPLDDETVNEDAS). Residues 135–147 (NEDKDDFKGPEFR) show a composition bias toward basic and acidic residues. Glycyl lysine isopeptide (Lys-Gly) (interchain with G-Cter in SUMO2) cross-links involve residues Lys138 and Lys142. Residues 159–296 (KRGEDGLHGI…LEQLLQQNKK (138 aa)) enclose the ADD domain. The segment at 170–206 (SCTACGQQVNHFQKDSIYRHPSLQVLICKNCFKYYMS) adopts a GATA-type; atypical zinc-finger fold. Ser213 is subject to Phosphoserine. The PHD-type; atypical zinc-finger motif lies at 217-272 (DEQCRWCAEGGNLICCDFCHNAFCKKCILRNLGRKELSTIMDENNQWYCYICHPEP). A Glycyl lysine isopeptide (Lys-Gly) (interchain with G-Cter in SUMO2) cross-link involves residue Lys299. Ser316 is modified (phosphoserine). Residue Lys438 forms a Glycyl lysine isopeptide (Lys-Gly) (interchain with G-Cter in SUMO2) linkage. Over residues 445–502 (KGEKPCALEKKDISKSEAKLSRKQVDSEHMHQNVPTEEQRTNKSTGGEHKKSDRKEEP) the composition is skewed to basic and acidic residues. Disordered regions lie at residues 445 to 516 (KGEK…LDMD) and 535 to 576 (AMEV…GIKS). Residues 550–567 (SGTEQEVESSSVKLNISS) are compositionally biased toward polar residues. Residues 581 to 594 (KVTKELYVKLTPVS) carry the PxVxL motif motif. Thr591 carries the post-translational modification Phosphothreonine. Residues 593 to 616 (VSLSNSPIKGADCQEVPQDKDGYK) are disordered. Residues Ser594 and Ser598 each carry the phosphoserine modification. Lys623 participates in a covalent cross-link: Glycyl lysine isopeptide (Lys-Gly) (interchain with G-Cter in SUMO1); alternate. Lys623 is covalently cross-linked (Glycyl lysine isopeptide (Lys-Gly) (interchain with G-Cter in SUMO2); alternate). Ser634 is subject to Phosphoserine. The interval 649 to 956 (EESDLRRSPR…KHLKTKTCKK (308 aa)) is disordered. The residue at position 674 (Thr674) is a Phosphothreonine. A phosphoserine mark is found at Ser675, Ser677, Ser729, and Ser731. Positions 755-777 (NEIHTNHKTLYDLKTQAGKDDKG) are enriched in basic and acidic residues. Ser784, Ser819, Ser849, Ser850, Ser875, and Ser876 each carry phosphoserine. The segment covering 843–864 (NTKDFDSSEDEKHSKKGMDNQG) has biased composition (basic and acidic residues). Residues 878–887 (DAERKQERET) are compositionally biased toward basic and acidic residues. Phosphoserine is present on Ser889. 2 stretches are compositionally biased toward basic and acidic residues: residues 894–909 (TVDKDTTIMELRDRLP) and 920–944 (GVDKLSGKEESFTSLEVRKVAETKE). The segment covering 945-955 (KSKHLKTKTCK) has biased composition (basic residues). Ser962 carries the phosphoserine modification. Lys967 is modified (N6-acetyllysine). The span at 968 to 1004 (FLKKDQSDETSEDDKKQSKKGTEEKKKPSDFKKKVIK) shows a compositional bias: basic and acidic residues. Residues 968–1479 (FLKKDQSDET…SKSPGKGRKK (512 aa)) form a disordered region. Position 974 is a phosphoserine (Ser974). Phosphothreonine is present on Thr977. Lys1004 is covalently cross-linked (Glycyl lysine isopeptide (Lys-Gly) (interchain with G-Cter in SUMO2)). Ser1011, Ser1012, and Ser1013 each carry phosphoserine. Basic and acidic residues predominate over residues 1015-1027 (GTEKLPEREEICH). A compositionally biased stretch (basic residues) spans 1045-1055 (KSKKIRDKTSK). Basic and acidic residues predominate over residues 1056-1082 (KKDELSDYAEKSTGKGDSCDSSEDKKS). Ser1061 carries the phosphoserine modification. Tyr1063 carries the post-translational modification Phosphotyrosine. Residues 1090 to 1102 (EKKRCKLLGKSSR) show a composition bias toward basic residues. Residues 1103–1139 (KRQDCSSSDTEKYSMKEDGCNSSDKRLKRIELRERRN) are compositionally biased toward basic and acidic residues. Over residues 1167 to 1195 (KKKQRTSSKKKAVIVKEKKRNSLRTSTKR) the composition is skewed to basic residues. An interaction with DAXX region spans residues 1189-1326 (LRTSTKRKQA…KNQVNSESDS (138 aa)). Positions 1233–1246 (LVLSSHTGFCQSSG) are enriched in polar residues. Residues Ser1244, Ser1245, and Ser1253 each carry the phosphoserine modification. Residues 1267–1281 (PENRIAKKMLLEEIK) are compositionally biased toward basic and acidic residues. Positions 1286-1297 (SDEDGSSDDEPE) are enriched in acidic residues. The segment covering 1298-1308 (EGKKRTGKQNE) has biased composition (basic and acidic residues). Residues Ser1322, Ser1324, and Ser1326 each carry the phosphoserine modification. Over residues 1334-1345 (PRYRHRLLRHKL) the composition is skewed to basic residues. Phosphoserine occurs at positions 1348 and 1352. Basic and acidic residues-rich tracts occupy residues 1353–1368 (GEEKKTKPKEHKEVKG) and 1408–1417 (KKAELEENQR). Over residues 1419–1428 (YKQKKKRRRI) the composition is skewed to basic residues. The span at 1443–1468 (EEEEEEKEEEEEEEEEEEEEEEDEND) shows a compositional bias: acidic residues. Residue Lys1488 forms a Glycyl lysine isopeptide (Lys-Gly) (interchain with G-Cter in SUMO2) linkage. Ser1527 bears the Phosphoserine mark. Thr1529 bears the Phosphothreonine mark. In terms of domain architecture, Helicase ATP-binding spans 1581–1768 (KTKKSPGSGC…HCMVNFIKEN (188 aa)). An ATP-binding site is contributed by 1594 to 1601 (HCMGLGKT). The DEGH box motif lies at 1719 to 1722 (DEGH). Ser1906 and Ser1913 each carry phosphoserine. The tract at residues 1913–2000 (SDSDETSMSL…SSNPSSPAPD (88 aa)) is disordered. Residues 1929 to 1938 (KKKKKGKKGK) are compositionally biased toward basic residues. A Glycyl lysine isopeptide (Lys-Gly) (interchain with G-Cter in SUMO1); alternate cross-link involves residue Lys1982. Lys1982 participates in a covalent cross-link: Glycyl lysine isopeptide (Lys-Gly) (interchain with G-Cter in SUMO2); alternate. Lys1987 participates in a covalent cross-link: Glycyl lysine isopeptide (Lys-Gly) (interchain with G-Cter in SUMO2). Residues 1990-1999 (SSSNPSSPAP) are compositionally biased toward low complexity. 2 positions are modified to phosphoserine: Ser1992 and Ser1996. The tract at residues 2010–2280 (DAEVLEHSGK…RKAAWAEYEA (271 aa)) is interaction with MECP2. Residues 2025–2205 (EILRMAEEIG…ERHFTMNELT (181 aa)) enclose the Helicase C-terminal domain. Residue Ser2220 is modified to Phosphoserine. Residues 2462 to 2492 (PVAGGMQPPPLQRAPPPMRSKNPGPSQGKSM) are disordered. Pro residues predominate over residues 2468–2479 (QPPPLQRAPPPM). 2 positions are modified to omega-N-methylarginine: Arg2474 and Arg2480.

This sequence belongs to the SNF2/RAD54 helicase family. Interacts with DAXX to form the chromatin remodeling complex ATRX:DAXX. Probably binds EZH2. Binds annexin V in a calcium and phosphatidylcholine/phosphatidylserine-dependent manner. Interacts directly with CBX5 via the PxVxL motif. Interacts with RAD50, MRE11 and NBN; indicative for an association with the MRN complex. Interacts with histone MACROH2A1. Interacts with histone H3 peptides methylated at 'Lys-10' with preferences H3K9me3 &gt; H3K9me2 &gt; H3K9me1. Interacts with histone H3 peptides unmethylated at 'Lys-5' (H3K4me0). Interacts with MECP2, SMC1 and SMC3. Interacts with SETDB1, TRIM28 and ZNF274. In terms of processing, phosphorylated at serine residues during mitose. Phosphorylation may promote the release from the nuclear matrix and progression to mitosis. As to expression, ubiquitous.

It is found in the nucleus. The protein resides in the chromosome. Its subcellular location is the telomere. The protein localises to the PML body. The enzyme catalyses ATP + H2O = ADP + phosphate + H(+). Involved in transcriptional regulation and chromatin remodeling. Facilitates DNA replication in multiple cellular environments and is required for efficient replication of a subset of genomic loci. Binds to DNA tandem repeat sequences in both telomeres and euchromatin and in vitro binds DNA quadruplex structures. May help stabilizing G-rich regions into regular chromatin structures by remodeling G4 DNA and incorporating H3.3-containing nucleosomes. Catalytic component of the chromatin remodeling complex ATRX:DAXX which has ATP-dependent DNA translocase activity and catalyzes the replication-independent deposition of histone H3.3 in pericentric DNA repeats outside S-phase and telomeres, and the in vitro remodeling of H3.3-containing nucleosomes. Its heterochromatin targeting is proposed to involve a combinatorial readout of histone H3 modifications (specifically methylation states of H3K9 and H3K4) and association with CBX5. Involved in maintaining telomere structural integrity in embryonic stem cells which probably implies recruitment of CBX5 to telomeres. Reports on the involvement in transcriptional regulation of telomeric repeat-containing RNA (TERRA) are conflicting; according to a report, it is not sufficient to decrease chromatin condensation at telomeres nor to increase expression of telomeric RNA in fibroblasts. May be involved in telomere maintenance via recombination in ALT (alternative lengthening of telomeres) cell lines. Acts as a negative regulator of chromatin incorporation of transcriptionally repressive histone MACROH2A1, particularily at telomeres and the alpha-globin cluster in erythroleukemic cells. Participates in the allele-specific gene expression at the imprinted IGF2/H19 gene locus. On the maternal allele, required for the chromatin occupancy of SMC1 and CTCTF within the H19 imprinting control region (ICR) and involved in esatblishment of histone tails modifications in the ICR. May be involved in brain development and facial morphogenesis. Binds to zinc-finger coding genes with atypical chromatin signatures and regulates its H3K9me3 levels. Forms a complex with ZNF274, TRIM28 and SETDB1 to facilitate the deposition and maintenance of H3K9me3 at the 3' exons of zinc-finger genes. This is Transcriptional regulator ATRX (ATRX) from Homo sapiens (Human).